Here is a 475-residue protein sequence, read N- to C-terminus: Aspartyl/glutamyl-tRNA(Asn/Gln) amidotransferase subunit B (475 aa).

The protein belongs to the GatB/GatE family. GatB subfamily. As to quaternary structure, heterotrimer of A, B and C subunits.

The enzyme catalyses L-glutamyl-tRNA(Gln) + L-glutamine + ATP + H2O = L-glutaminyl-tRNA(Gln) + L-glutamate + ADP + phosphate + H(+). The catalysed reaction is L-aspartyl-tRNA(Asn) + L-glutamine + ATP + H2O = L-asparaginyl-tRNA(Asn) + L-glutamate + ADP + phosphate + 2 H(+). Functionally, allows the formation of correctly charged Asn-tRNA(Asn) or Gln-tRNA(Gln) through the transamidation of misacylated Asp-tRNA(Asn) or Glu-tRNA(Gln) in organisms which lack either or both of asparaginyl-tRNA or glutaminyl-tRNA synthetases. The reaction takes place in the presence of glutamine and ATP through an activated phospho-Asp-tRNA(Asn) or phospho-Glu-tRNA(Gln). The polypeptide is Aspartyl/glutamyl-tRNA(Asn/Gln) amidotransferase subunit B (Staphylococcus carnosus (strain TM300)).